The primary structure comprises 262 residues: Flap endonuclease Xni (262 aa).

Asp-105 is a Mg(2+) binding site. One can recognise a 5'-3' exonuclease domain in the interval 164–251; the sequence is SQFLDLMALA…NINLKDFRAN (88 aa). The K(+) site is built by Leu-172, Ala-173, Pro-181, Ile-183, and Ile-186. Residues 185–190 are interaction with DNA; the sequence is GIGPKS.

This sequence belongs to the Xni family. The cofactor is Mg(2+). Requires K(+) as cofactor.

Its function is as follows. Has flap endonuclease activity. During DNA replication, flap endonucleases cleave the 5'-overhanging flap structure that is generated by displacement synthesis when DNA polymerase encounters the 5'-end of a downstream Okazaki fragment. The polypeptide is Flap endonuclease Xni (Shewanella sp. (strain W3-18-1)).